A 214-amino-acid chain; its full sequence is RNA pyrophosphohydrolase (214 aa).

The 144-residue stretch at 6-149 (GFRPNVGIIL…KRDVYQLALT (144 aa)) folds into the Nudix hydrolase domain. Residues 38–59 (GGIKYGETPMQAMYRELHEETG) carry the Nudix box motif.

The protein belongs to the Nudix hydrolase family. RppH subfamily. The cofactor is a divalent metal cation.

Its function is as follows. Accelerates the degradation of transcripts by removing pyrophosphate from the 5'-end of triphosphorylated RNA, leading to a more labile monophosphorylated state that can stimulate subsequent ribonuclease cleavage. This Burkholderia cenocepacia (strain HI2424) protein is RNA pyrophosphohydrolase.